Reading from the N-terminus, the 130-residue chain is MNLIAKLEQEEIERALAGKTIPEFAPGDTVIVNVNVVEGNRKRVQAYEGVVIAIRSRGLNSNFIVRKISSGEGVERTFQTYSPLLASIVVKRRGDVRRAKLYYLRERSGKSARIKEKLVSKDRTAAASQE.

It belongs to the bacterial ribosomal protein bL19 family.

This protein is located at the 30S-50S ribosomal subunit interface and may play a role in the structure and function of the aminoacyl-tRNA binding site. This Burkholderia lata (strain ATCC 17760 / DSM 23089 / LMG 22485 / NCIMB 9086 / R18194 / 383) protein is Large ribosomal subunit protein bL19.